The sequence spans 1416 residues: DNA-directed RNA polymerase subunit beta' (1416 aa).

The Zn(2+) site is built by cysteine 71, cysteine 73, cysteine 86, and cysteine 89. The Mg(2+) site is built by aspartate 461, aspartate 463, and aspartate 465. Residues cysteine 815, cysteine 889, cysteine 896, and cysteine 899 each coordinate Zn(2+).

The protein belongs to the RNA polymerase beta' chain family. The RNAP catalytic core consists of 2 alpha, 1 beta, 1 beta' and 1 omega subunit. When a sigma factor is associated with the core the holoenzyme is formed, which can initiate transcription. The cofactor is Mg(2+). It depends on Zn(2+) as a cofactor.

The catalysed reaction is RNA(n) + a ribonucleoside 5'-triphosphate = RNA(n+1) + diphosphate. DNA-dependent RNA polymerase catalyzes the transcription of DNA into RNA using the four ribonucleoside triphosphates as substrates. The sequence is that of DNA-directed RNA polymerase subunit beta' from Haemophilus influenzae (strain PittEE).